The chain runs to 466 residues: uncharacterized protein (466 aa).

The Autotransporter domain maps to 178 to 466; sequence SQGSASSMWM…QGMLGVKYSW (289 aa).

This is an uncharacterized protein from Escherichia coli (strain K12).